Here is a 484-residue protein sequence, read N- to C-terminus: Putative cysteine ligase BshC (484 aa).

Residues Arg-372–His-435 are a coiled coil.

It belongs to the BshC family.

This Thermus thermophilus (strain ATCC 27634 / DSM 579 / HB8) protein is Putative cysteine ligase BshC.